Reading from the N-terminus, the 383-residue chain is S-adenosylmethionine synthase 1 (383 aa).

His15 provides a ligand contact to ATP. Position 17 (Asp17) interacts with Mg(2+). Glu43 serves as a coordination point for K(+). Glu56 and Gln99 together coordinate L-methionine. The tract at residues Gln99 to Arg109 is flexible loop. ATP-binding positions include Asp162–Lys164, Arg228–Phe229, Asp237, Arg243–Lys244, Ala260, and Lys264. Asp237 serves as a coordination point for L-methionine. An L-methionine-binding site is contributed by Lys268.

The protein belongs to the AdoMet synthase family. As to quaternary structure, homotetramer; dimer of dimers. The cofactor is Mg(2+). It depends on K(+) as a cofactor.

Its subcellular location is the cytoplasm. It carries out the reaction L-methionine + ATP + H2O = S-adenosyl-L-methionine + phosphate + diphosphate. Its pathway is amino-acid biosynthesis; S-adenosyl-L-methionine biosynthesis; S-adenosyl-L-methionine from L-methionine: step 1/1. Its function is as follows. Catalyzes the formation of S-adenosylmethionine (AdoMet) from methionine and ATP. The overall synthetic reaction is composed of two sequential steps, AdoMet formation and the subsequent tripolyphosphate hydrolysis which occurs prior to release of AdoMet from the enzyme. The polypeptide is S-adenosylmethionine synthase 1 (Rhodopseudomonas palustris (strain BisB18)).